The sequence spans 87 residues: Selenoprotein W (87 aa).

Residues 10 to 13 constitute a cross-link (cysteinyl-selenocysteine (Cys-Sec); redox-active); that stretch reads CGAU. Position 13 (Sec-13) is a non-standard amino acid, selenocysteine. Cys-37 is modified (S-glutathionyl cysteine).

The protein belongs to the SelWTH family. Selenoprotein W subfamily. Interacts with DPYSL2, PRDX1, YWHAB, YWHAG, HSP70 and HSP90.

Its subcellular location is the cytoplasm. Plays a role as a glutathione (GSH)-dependent antioxidant. May be involved in a redox-related process. May play a role in the myopathies of selenium deficiency. This is Selenoprotein W from Sus scrofa (Pig).